A 1321-amino-acid polypeptide reads, in one-letter code: Adhesion G protein-coupled receptor A3 (1321 aa).

Positions 1 to 33 (MEPPGRRRGRAQPPLLLPLSLLALLALLGGGGG) are cleaved as a signal peptide. Topologically, residues 34-761 (GGAAALPAGC…YTQAASLLHP (728 aa)) are extracellular. 2 N-linked (GlcNAc...) asparagine glycosylation sites follow: Asn-81 and Asn-98. LRR repeat units follow at residues 82–103 (RTVT…SFSG), 106–127 (LLER…AFWG), 130–151 (SLKR…IFRG), and 154–175 (NLVR…TFDY). Residues Asn-159, Asn-206, Asn-301, Asn-332, Asn-433, Asn-453, and Asn-592 are each glycosylated (N-linked (GlcNAc...) asparagine). An LRRCT domain is found at 187–237 (EYLLCDCNILWMHRWVKEKNITVRDTRCVYPKSLQAQPVTGVKQELLTCDP). The Ig-like domain maps to 242–340 (PSFYMTPSHR…GNNTRTVDIV (99 aa)). A disulfide bond links Cys-264 and Cys-324. The GAIN-B domain maps to 583–750 (LDKQLSFKCN…AVLMDLTGSE (168 aa)). The LRR 5 repeat unit spans residues 594-620 (SNTFSSLALKNTIVEASIQLPPSLFSP). N-linked (GlcNAc...) asparagine glycosylation is found at Asn-652, Asn-687, and Asn-728. The GPS stretch occupies residues 701–750 (AARWDFDLLNGQGGWKSDGCHILYSDENITTIQCYSLSNYAVLMDLTGSE). Cys-720 and Cys-734 are joined by a disulfide. The helical transmembrane segment at 762–782 (VVYTTAIILLLCLLAVIVSYI) threads the bilayer. Over 783–796 (YHHSLIRISLKSWH) the chain is Cytoplasmic. A helical transmembrane segment spans residues 797-817 (MLVNLCFHIFLTCVVFVGGIT). Residues 818–826 (QTRNASICQ) are Extracellular-facing. N-linked (GlcNAc...) asparagine glycosylation occurs at Asn-821. The helical transmembrane segment at 827–847 (AVGIILHYSTLATVLWVGVTA) threads the bilayer. Over 848-876 (RNIYKQVTKKAKRCQDPDEPPPPPRPMLR) the chain is Cytoplasmic. Residues 877 to 897 (FYLIGGGIPIIVCGITAAANI) traverse the membrane as a helical segment. The Extracellular segment spans residues 898–919 (KNYGSRPNAPYCWMAWEPSLGA). Residues 920–940 (FYGPASFITFVNCMYFLSIFI) traverse the membrane as a helical segment. Residues 941–996 (QLKRHPERKYELKEPTEEQQRLAANENGEINHQDSMSLSLISTSALENEHTFHSQL) lie on the Cytoplasmic side of the membrane. The helical transmembrane segment at 997-1017 (LGASLTLLLYVALWMFGALAV) threads the bilayer. The Extracellular segment spans residues 1018 to 1024 (SLYYPLD). Residues 1025–1045 (LVFSFVFGATSLSFSAFFVVH) traverse the membrane as a helical segment. The Cytoplasmic segment spans residues 1046–1321 (HCVNREDVRL…TGLWKHETTV (276 aa)). Positions 1073-1083 (NVQPPNSNGTN) are enriched in polar residues. 4 disordered regions span residues 1073–1094 (NVQP…NSSA), 1198–1219 (VEGS…GHSR), 1231–1265 (QYNP…KKDA), and 1294–1321 (SNGQ…ETTV). Residues 1233–1250 (NPPQQDSSDACSTLPKSS) show a composition bias toward polar residues. The short motif at 1319 to 1321 (TTV) is the PDZ-binding element.

The protein belongs to the G-protein coupled receptor 2 family. Adhesion G-protein coupled receptor (ADGR) subfamily. As to quaternary structure, interacts (via PDZ-binding motif) with DLG1.

It localises to the membrane. In terms of biological role, orphan receptor that may have a role in planar cell polarity pathway. This is Adhesion G protein-coupled receptor A3 from Homo sapiens (Human).